Reading from the N-terminus, the 347-residue chain is Nicotinate-nucleotide--dimethylbenzimidazole phosphoribosyltransferase (347 aa).

Glu-316 (proton acceptor) is an active-site residue.

It belongs to the CobT family.

The enzyme catalyses 5,6-dimethylbenzimidazole + nicotinate beta-D-ribonucleotide = alpha-ribazole 5'-phosphate + nicotinate + H(+). Its pathway is nucleoside biosynthesis; alpha-ribazole biosynthesis; alpha-ribazole from 5,6-dimethylbenzimidazole: step 1/2. Its function is as follows. Catalyzes the synthesis of alpha-ribazole-5'-phosphate from nicotinate mononucleotide (NAMN) and 5,6-dimethylbenzimidazole (DMB). The protein is Nicotinate-nucleotide--dimethylbenzimidazole phosphoribosyltransferase of Vibrio parahaemolyticus serotype O3:K6 (strain RIMD 2210633).